The chain runs to 321 residues: Lipoyl synthase (321 aa).

Residues Cys-68, Cys-73, Cys-79, Cys-94, Cys-98, Cys-101, and Ser-308 each coordinate [4Fe-4S] cluster. In terms of domain architecture, Radical SAM core spans 80–297; that stretch reads FNHGTATFMI…KAAAMDMGFT (218 aa).

The protein belongs to the radical SAM superfamily. Lipoyl synthase family. It depends on [4Fe-4S] cluster as a cofactor.

It localises to the cytoplasm. It catalyses the reaction [[Fe-S] cluster scaffold protein carrying a second [4Fe-4S](2+) cluster] + N(6)-octanoyl-L-lysyl-[protein] + 2 oxidized [2Fe-2S]-[ferredoxin] + 2 S-adenosyl-L-methionine + 4 H(+) = [[Fe-S] cluster scaffold protein] + N(6)-[(R)-dihydrolipoyl]-L-lysyl-[protein] + 4 Fe(3+) + 2 hydrogen sulfide + 2 5'-deoxyadenosine + 2 L-methionine + 2 reduced [2Fe-2S]-[ferredoxin]. The protein operates within protein modification; protein lipoylation via endogenous pathway; protein N(6)-(lipoyl)lysine from octanoyl-[acyl-carrier-protein]: step 2/2. Catalyzes the radical-mediated insertion of two sulfur atoms into the C-6 and C-8 positions of the octanoyl moiety bound to the lipoyl domains of lipoate-dependent enzymes, thereby converting the octanoylated domains into lipoylated derivatives. The sequence is that of Lipoyl synthase from Erwinia tasmaniensis (strain DSM 17950 / CFBP 7177 / CIP 109463 / NCPPB 4357 / Et1/99).